The primary structure comprises 303 residues: Acetylglutamate kinase (303 aa).

Substrate contacts are provided by residues 68–69, Arg-90, and Asn-194; that span reads GG.

The protein belongs to the acetylglutamate kinase family. ArgB subfamily.

It is found in the cytoplasm. It carries out the reaction N-acetyl-L-glutamate + ATP = N-acetyl-L-glutamyl 5-phosphate + ADP. Its pathway is amino-acid biosynthesis; L-arginine biosynthesis; N(2)-acetyl-L-ornithine from L-glutamate: step 2/4. Catalyzes the ATP-dependent phosphorylation of N-acetyl-L-glutamate. The protein is Acetylglutamate kinase of Psychrobacter arcticus (strain DSM 17307 / VKM B-2377 / 273-4).